The chain runs to 132 residues: Holo-[acyl-carrier-protein] synthase (132 aa).

Residues D13 and E63 each coordinate Mg(2+).

It belongs to the P-Pant transferase superfamily. AcpS family. It depends on Mg(2+) as a cofactor.

The protein resides in the cytoplasm. It catalyses the reaction apo-[ACP] + CoA = holo-[ACP] + adenosine 3',5'-bisphosphate + H(+). Functionally, transfers the 4'-phosphopantetheine moiety from coenzyme A to a Ser of acyl-carrier-protein. The chain is Holo-[acyl-carrier-protein] synthase from Gloeobacter violaceus (strain ATCC 29082 / PCC 7421).